Reading from the N-terminus, the 162-residue chain is uncharacterized protein (162 aa).

The next 3 helical transmembrane spans lie at L7–L27, L51–G71, and T134–G154.

It belongs to the DedA family.

It is found in the cell membrane. This is an uncharacterized protein from Bacillus subtilis (strain 168).